The chain runs to 996 residues: Filament-like plant protein 5 (996 aa).

Positions 1-20 (MEGRGWPWKRKSSDKATTEK) are disordered. Coiled-coil stretches lie at residues 59 to 94 (THMSRMEDQVKLFEVQVKDLKEKLTLAHSEINTKES), 133 to 248 (TAED…KYDL), 280 to 301 (VKKIAKLEAECHRLRGLLRKKL), and 359 to 387 (LTRRTLEMEEEIQTLKEHLSARNNELQVS). Disordered stretches follow at residues 409–482 (NNDK…SSSR) and 496–534 (VGSDPDGANSASKSSNSVCSRRSVEKQSSSKSSEPDEDT). Low complexity predominate over residues 417–428 (SNSRNLSESLSS). The segment covering 471–482 (VNGSSKPRSSSR) has biased composition (polar residues). Residues 503–527 (ANSASKSSNSVCSRRSVEKQSSSKS) are compositionally biased toward low complexity. 3 coiled-coil regions span residues 601-622 (QNSEKEQKNTKQQDLEAAVANI), 737-841 (DSSC…FTTE), and 876-906 (NQEKDIVSATEKLAACQETIHLLSQQLQSLQ). The disordered stretch occupies residues 962 to 996 (IMKSSSVSSSSKEDNEKHTRGLGRFFSSKSKNSAR).

Belongs to the FPP family. In terms of assembly, interacts with WPP/MAF proteins.

The chain is Filament-like plant protein 5 (FPP5) from Arabidopsis thaliana (Mouse-ear cress).